We begin with the raw amino-acid sequence, 490 residues long: Glutamyl-tRNA(Gln) amidotransferase subunit A (490 aa).

Residues K76 and S151 each act as charge relay system in the active site. S175 serves as the catalytic Acyl-ester intermediate.

It belongs to the amidase family. GatA subfamily. As to quaternary structure, heterotrimer of A, B and C subunits.

It catalyses the reaction L-glutamyl-tRNA(Gln) + L-glutamine + ATP + H2O = L-glutaminyl-tRNA(Gln) + L-glutamate + ADP + phosphate + H(+). In terms of biological role, allows the formation of correctly charged Gln-tRNA(Gln) through the transamidation of misacylated Glu-tRNA(Gln) in organisms which lack glutaminyl-tRNA synthetase. The reaction takes place in the presence of glutamine and ATP through an activated gamma-phospho-Glu-tRNA(Gln). The protein is Glutamyl-tRNA(Gln) amidotransferase subunit A of Methylobacillus flagellatus (strain ATCC 51484 / DSM 6875 / VKM B-1610 / KT).